Here is a 623-residue protein sequence, read N- to C-terminus: MFLEEYDVIVVGAGHAGSEAAAAAANLGSKTLLVTMSLQNIAQMSCNPAMGGIAKGQIVREIDALGGYSGIVSDRTAIQFKMLNKSKGPAMWSPRVQSDRMRFAEEWRMMLEGTPNLDFYQEMVKGLIIENGKIKGIRTSLGVEIRSKSVVLTNGTFLNGLIHIGEKQFGGGRAGESAATGITEDLVKAGFEAGRMKTGTPPRVDGRSLDYSKMNEEKGDAKPDKFSYSDLTKPLTQQRSCYMTYTSLNVHDILREGFDRSPMFNGRIKSLGPRYCPSIEDKINRFADKERHQLFVEPEGWNTCEVYVNGFSTSLPEDIQFKALRSVAGFENVKFFRPGYAIEYDYFPPTQLKHTLETKLVEGLYFAGQINGTTGYEEAASQGLMAGINAHLKVHEKAPLILKRDEAYIGVLIDDLITKGTEEPYRMFTSRAEYRTLLRQDNADFRLTPMSFEIGLASEDRMRRMEHKLNESEKMVAFFKETSVTVAETNPILIEKESAPISQGDKMFKVFSRPQIELEDMLKFEKVDSYIKENNLDEEIVEQAVIQVKYSGYIEKERNNADKLNRLEEVKIPENFDYNKIKSMSIEAKQKLSKIRPVTISQASRISGVSPSDISVLLIYMGR.

An FAD-binding site is contributed by 12–17 (GAGHAG). 272 to 286 (GPRYCPSIEDKINRF) lines the NAD(+) pocket.

Belongs to the MnmG family. As to quaternary structure, homodimer. Heterotetramer of two MnmE and two MnmG subunits. FAD is required as a cofactor.

The protein resides in the cytoplasm. Its function is as follows. NAD-binding protein involved in the addition of a carboxymethylaminomethyl (cmnm) group at the wobble position (U34) of certain tRNAs, forming tRNA-cmnm(5)s(2)U34. The polypeptide is tRNA uridine 5-carboxymethylaminomethyl modification enzyme MnmG (Flavobacterium johnsoniae (strain ATCC 17061 / DSM 2064 / JCM 8514 / BCRC 14874 / CCUG 350202 / NBRC 14942 / NCIMB 11054 / UW101) (Cytophaga johnsonae)).